The following is a 301-amino-acid chain: GTPase Era (301 aa).

Residues 7 to 175 (YCGFIAIVGR…AAIVRKHLPE (169 aa)) enclose the Era-type G domain. The G1 stretch occupies residues 15-22 (GRPNVGKS). Position 15 to 22 (15 to 22 (GRPNVGKS)) interacts with GTP. The G2 stretch occupies residues 41–45 (QTTRH). Residues 62-65 (DTPG) are G3. Residues 62-66 (DTPGL) and 124-127 (NKVD) contribute to the GTP site. Residues 124–127 (NKVD) are G4. The segment at 154–156 (ISA) is G5. The region spanning 206–283 (LGAELPYSVT…HLELWVKVKS (78 aa)) is the KH type-2 domain.

Belongs to the TRAFAC class TrmE-Era-EngA-EngB-Septin-like GTPase superfamily. Era GTPase family. As to quaternary structure, monomer.

It localises to the cytoplasm. Its subcellular location is the cell inner membrane. In terms of biological role, an essential GTPase that binds both GDP and GTP, with rapid nucleotide exchange. Plays a role in 16S rRNA processing and 30S ribosomal subunit biogenesis and possibly also in cell cycle regulation and energy metabolism. The protein is GTPase Era of Escherichia fergusonii (strain ATCC 35469 / DSM 13698 / CCUG 18766 / IAM 14443 / JCM 21226 / LMG 7866 / NBRC 102419 / NCTC 12128 / CDC 0568-73).